An 84-amino-acid chain; its full sequence is Putative protein BCE-1 (84 aa).

This is Putative protein BCE-1 (BCE1) from Homo sapiens (Human).